We begin with the raw amino-acid sequence, 174 residues long: NADH-ubiquinone oxidoreductase chain 6 (174 aa).

6 helical membrane-spanning segments follow: residues Met1 to Ser21, Ser24 to Leu44, Gly47 to Phe67, Val86 to Val106, Gly111 to Gly131, and Trp151 to Ala171.

It belongs to the complex I subunit 6 family. As to quaternary structure, core subunit of respiratory chain NADH dehydrogenase (Complex I) which is composed of 45 different subunits.

The protein resides in the mitochondrion inner membrane. The enzyme catalyses a ubiquinone + NADH + 5 H(+)(in) = a ubiquinol + NAD(+) + 4 H(+)(out). Its function is as follows. Core subunit of the mitochondrial membrane respiratory chain NADH dehydrogenase (Complex I) which catalyzes electron transfer from NADH through the respiratory chain, using ubiquinone as an electron acceptor. Essential for the catalytic activity and assembly of complex I. The protein is NADH-ubiquinone oxidoreductase chain 6 (MT-ND6) of Pan troglodytes (Chimpanzee).